Reading from the N-terminus, the 166-residue chain is Crossover junction endodeoxyribonuclease RuvC (166 aa).

Catalysis depends on residues D12, E71, and D143. Mg(2+)-binding residues include D12, E71, and D143.

The protein belongs to the RuvC family. In terms of assembly, homodimer which binds Holliday junction (HJ) DNA. The HJ becomes 2-fold symmetrical on binding to RuvC with unstacked arms; it has a different conformation from HJ DNA in complex with RuvA. In the full resolvosome a probable DNA-RuvA(4)-RuvB(12)-RuvC(2) complex forms which resolves the HJ. Mg(2+) serves as cofactor.

It localises to the cytoplasm. It carries out the reaction Endonucleolytic cleavage at a junction such as a reciprocal single-stranded crossover between two homologous DNA duplexes (Holliday junction).. In terms of biological role, the RuvA-RuvB-RuvC complex processes Holliday junction (HJ) DNA during genetic recombination and DNA repair. Endonuclease that resolves HJ intermediates. Cleaves cruciform DNA by making single-stranded nicks across the HJ at symmetrical positions within the homologous arms, yielding a 5'-phosphate and a 3'-hydroxyl group; requires a central core of homology in the junction. The consensus cleavage sequence is 5'-(A/T)TT(C/G)-3'. Cleavage occurs on the 3'-side of the TT dinucleotide at the point of strand exchange. HJ branch migration catalyzed by RuvA-RuvB allows RuvC to scan DNA until it finds its consensus sequence, where it cleaves and resolves the cruciform DNA. The sequence is that of Crossover junction endodeoxyribonuclease RuvC from Oleidesulfovibrio alaskensis (strain ATCC BAA-1058 / DSM 17464 / G20) (Desulfovibrio alaskensis).